The sequence spans 503 residues: Cardiolipin synthase (503 aa).

The next 3 helical transmembrane spans lie at L5–W25, I29–F49, and L59–F79. 2 PLD phosphodiesterase domains span residues I238–Y265 and T416–S443. Active-site residues include H243, K245, D250, H421, K423, and D428.

Belongs to the phospholipase D family. Cardiolipin synthase subfamily.

The protein localises to the cell membrane. It carries out the reaction 2 a 1,2-diacyl-sn-glycero-3-phospho-(1'-sn-glycerol) = a cardiolipin + glycerol. In terms of biological role, catalyzes the reversible phosphatidyl group transfer from one phosphatidylglycerol molecule to another to form cardiolipin (CL) (diphosphatidylglycerol) and glycerol. The sequence is that of Cardiolipin synthase (cls) from Halalkalibacterium halodurans (strain ATCC BAA-125 / DSM 18197 / FERM 7344 / JCM 9153 / C-125) (Bacillus halodurans).